Reading from the N-terminus, the 923-residue chain is Protocadherin gamma-B4 (923 aa).

Positions 1–30 are cleaved as a signal peptide; that stretch reads MGSGAGELGRAERLPVLFLFLLSLFCPALC. 6 Cadherin domains span residues 31–133, 134–242, 243–345, 346–450, 451–560, and 568–673; these read EQIR…TPKF, TQNS…APVF, SQDV…APEV, IFQS…APVF, SQSS…APRV, and DGSA…LPDI. Residues 31–689 are Extracellular-facing; that stretch reads EQIRYRIPEE…SDLQAELQFY (659 aa). N-linked (GlcNAc...) asparagine glycans are attached at residues N417 and N543. The chain crosses the membrane as a helical span at residues 690-710; that stretch reads LVVALALISVLFLVAMILAIA. The Cytoplasmic segment spans residues 711 to 923; it reads LRLRRSSSPA…KKKSGKKEKK (213 aa). 2 disordered regions span residues 797–832 and 893–923; these read SHQQAPPNTDWRFSQAQRPGTSGSQNGDDTGTWPNN and ATLTNAAGKRDGKAPAGGNGNKKKSGKKEKK. A compositionally biased stretch (basic residues) spans 913–923; that stretch reads NKKKSGKKEKK.

Its subcellular location is the cell membrane. Its function is as follows. Potential calcium-dependent cell-adhesion protein. May be involved in the establishment and maintenance of specific neuronal connections in the brain. The chain is Protocadherin gamma-B4 (PCDHGB4) from Homo sapiens (Human).